Here is a 456-residue protein sequence, read N- to C-terminus: Adenylosuccinate lyase (456 aa).

Residues 15–16 (RY) and 90–92 (NHD) each bind N(6)-(1,2-dicarboxyethyl)-AMP. N6-acetyllysine is present on Lys94. Residue 122-123 (TS) participates in N(6)-(1,2-dicarboxyethyl)-AMP binding. His171 (proton donor/acceptor) is an active-site residue. Residue Gln247 coordinates N(6)-(1,2-dicarboxyethyl)-AMP. Ser295 functions as the Proton donor/acceptor in the catalytic mechanism. N(6)-(1,2-dicarboxyethyl)-AMP-binding positions include Ser296, 301-303 (KVN), Asn309, Arg335, and 340-344 (STVLR). Lys366 is subject to N6-acetyllysine.

It belongs to the lyase 1 family. Adenylosuccinate lyase subfamily. Homotetramer. Residues from neighboring subunits contribute catalytic and substrate-binding residues to each active site.

It catalyses the reaction N(6)-(1,2-dicarboxyethyl)-AMP = fumarate + AMP. The enzyme catalyses (2S)-2-[5-amino-1-(5-phospho-beta-D-ribosyl)imidazole-4-carboxamido]succinate = 5-amino-1-(5-phospho-beta-D-ribosyl)imidazole-4-carboxamide + fumarate. The protein operates within purine metabolism; AMP biosynthesis via de novo pathway; AMP from IMP: step 2/2. Its pathway is purine metabolism; IMP biosynthesis via de novo pathway; 5-amino-1-(5-phospho-D-ribosyl)imidazole-4-carboxamide from 5-amino-1-(5-phospho-D-ribosyl)imidazole-4-carboxylate: step 2/2. Its function is as follows. Catalyzes two reactions in de novo purine nucleotide biosynthesis. Catalyzes the breakdown of 5-aminoimidazole- (N-succinylocarboxamide) ribotide (SAICAR or 2-[5-amino-1-(5-phospho-beta-D-ribosyl)imidazole-4-carboxamido]succinate) to 5-aminoimidazole-4-carboxamide ribotide (AICAR or 5-amino-1-(5-phospho-beta-D-ribosyl)imidazole-4-carboxamide) and fumarate, and of adenylosuccinate (ADS or N(6)-(1,2-dicarboxyethyl)-AMP) to adenosine monophosphate (AMP) and fumarate. This chain is Adenylosuccinate lyase (purB), found in Escherichia coli O6:H1 (strain CFT073 / ATCC 700928 / UPEC).